We begin with the raw amino-acid sequence, 783 residues long: ATP-dependent zinc metalloprotease FtsH (783 aa).

Low complexity predominate over residues 1–16; that stretch reads MSETPNTNEQNNPNNQ. A disordered region spans residues 1–79; that stretch reads MSETPNTNEQ…DKEEDFASRL (79 aa). Residues 1–86 lie on the Cytoplasmic side of the membrane; that stretch reads MSETPNTNEQ…SRLNTRPPQR (86 aa). Residues 35–61 show a composition bias toward basic and acidic residues; sequence MPERPERHNQADGAPKRPGDDDRKSER. Residues 87–107 traverse the membrane as a helical segment; the sequence is ASIITIIIIFLVAFFIGSQMM. Residues 108 to 233 lie on the Extracellular side of the membrane; that stretch reads NMVHGEETDD…EYQVTLPSNV (126 aa). Residues 234 to 254 traverse the membrane as a helical segment; that stretch reads TEILISVLPMLLFAGLLIYFF. Residues 255–783 are Cytoplasmic-facing; sequence SQMSKANNSQ…APQPPAAPQQ (529 aa). 325–332 serves as a coordination point for ATP; that stretch reads GPPGTGKT. Histidine 547 serves as a coordination point for Zn(2+). Glutamate 548 is a catalytic residue. Zn(2+) contacts are provided by histidine 551 and aspartate 623. Low complexity predominate over residues 738 to 771; it reads EAAAKAADQAEQPQVEAEPVAQVATPAAPVAPAV. Positions 738–783 are disordered; that stretch reads EAAAKAADQAEQPQVEAEPVAQVATPAAPVAPAVPEAPQPPAAPQQ. Residues 772–783 show a composition bias toward pro residues; it reads PEAPQPPAAPQQ.

It in the central section; belongs to the AAA ATPase family. This sequence in the C-terminal section; belongs to the peptidase M41 family. As to quaternary structure, homohexamer. Zn(2+) is required as a cofactor.

It is found in the cell membrane. In terms of biological role, acts as a processive, ATP-dependent zinc metallopeptidase for both cytoplasmic and membrane proteins. Plays a role in the quality control of integral membrane proteins. This Slackia heliotrinireducens (strain ATCC 29202 / DSM 20476 / NCTC 11029 / RHS 1) (Peptococcus heliotrinreducens) protein is ATP-dependent zinc metalloprotease FtsH.